Reading from the N-terminus, the 356-residue chain is Phosphoribosylformylglycinamidine cyclo-ligase (356 aa).

The protein belongs to the AIR synthase family.

The protein localises to the cytoplasm. The catalysed reaction is 2-formamido-N(1)-(5-O-phospho-beta-D-ribosyl)acetamidine + ATP = 5-amino-1-(5-phospho-beta-D-ribosyl)imidazole + ADP + phosphate + H(+). It participates in purine metabolism; IMP biosynthesis via de novo pathway; 5-amino-1-(5-phospho-D-ribosyl)imidazole from N(2)-formyl-N(1)-(5-phospho-D-ribosyl)glycinamide: step 2/2. This Acinetobacter baumannii (strain AB307-0294) protein is Phosphoribosylformylglycinamidine cyclo-ligase.